A 91-amino-acid chain; its full sequence is Small ribosomal subunit protein bS20 (91 aa).

The segment at 1–26 (MANLKSSKKDIRRTARRKERNGEDRT) is disordered.

Belongs to the bacterial ribosomal protein bS20 family.

Functionally, binds directly to 16S ribosomal RNA. This chain is Small ribosomal subunit protein bS20, found in Leptospira biflexa serovar Patoc (strain Patoc 1 / Ames).